A 1374-amino-acid chain; its full sequence is MSMADEDEEHTKALKAKEMMLPLFQKYNFTLKHNKLPIRHSKDDILARIRENPVIVLEGPTGCGKTTQVPQFILEEAYHRKEYCNIIVTQPRKIAAMSIAKRVSEERKCELGTLVGFKVGLKECLSPDTRLLYCTTGVLLQSLINSKTMANYTHVILDEIHEREVDMDFLLIVVRRFLATNSSKTKVILMSATIDSKAFAEYFKTPKKVGYLTAPIISVDRPRLYEVKEFYYDDLDKLRLDFAIDYENPGISSHMYTVAAKLVLVCDRLIENMHGEERMEYKPTVLIFLPGINEIDRMDHVLRETLTRIVNPKEKPNLDIHRLHSILPADEQVKVFRKPAPGQRKVILSTNIAESSITVPDVKFIIDFCLQRVLFTDTTTNFSTLRTEWASQANCIQRQGRAGRVMDGRVYRLVDRRFYENQMRFSTSPEILRCPLENVILKAKLLEMGPPHSILALAMNPPDLSDIRNTVLQLKELGALVQTVKGNYEQLDGDLTYMGRIMAKLPLDLRISKLIILGYIFSVLEESIIIAAGMNEKNIFLNQNSVRGYSQKMYWADGSGSDGIAILNAYIAWKSRKEQAGNESDMASWTRRMSLDLKCLMDMAELIREIKDRLNHVGMKEVSGPGRVVWSSREKTVILKVIMAGAFYPNYFIPMSVGGKELMERQSFTELGGRDPCNTVFFTGFDHEKYIGPLYTVQIKKLLSEGDFSKHQNMKVMYDRTTNRIFVTFLGSNDEHDQRGAFMPGKVHADVYRAIKLRKLGSRNRIMEIRTMRQRDAIEFATEMNLGHWEDANGWVPRRKVIRNAHLSVIPAIHQASMVCQVTNVIHCNKFYLRPEDTKNKDIFMDIHSKLNSRGYRLERFDPDWQFAVGQMVAAPLEEGSDRYARAVLKNYKNIRSTGDVMWTVFFLDYGHSSVLGQSAFRKLDGPLAYMKEIPQRVFEATLSEIQPSAIISPQGIWTAQSINRFKEMTLGKIFVVDVYSVVNDVASVVLKKGDEVPINSELIRLKFAQYAEESYISKLDHDMRERKQREMSLDEDVRYEVYHSSKNNQLKYEEDELEDVSPPEEKLRCKVMLSGPHSPLETTASSTVRSGVMKPVTIENDSVNSILLDSNPQDTHEKMLVGAFVHEQGNRLVVRQASMMPNIPGFGPLMALIFCPTCQMKKDEEETRVVSILTGLGCDKNTGESLFPEHDLALTLDVVLSDDDITEINALRYTMDTILHTDQDQTVPKFGDVSIENLKAKVKQYIIKILEHERKFMDIRHAPNDYDWKLVEENNAAEASSSSKKRKQDFNIYDNAIYPLLPPLGLLPVSAKQLDFLKRHCRELHKLALTDVNLPRHGITCQMCNTILETLPQLRIHLYSKLHRDRESQIKFR.

Residues 46–212 (LARIRENPVI…FKTPKKVGYL (167 aa)) enclose the Helicase ATP-binding domain. 59-66 (GPTGCGKT) provides a ligand contact to ATP. The DEAH box motif lies at 158 to 161 (DEIH). One can recognise a Helicase C-terminal domain in the interval 265–447 (VCDRLIENMH…NVILKAKLLE (183 aa)). Residues 866–931 (QFAVGQMVAA…RKLDGPLAYM (66 aa)) form the Tudor domain.

The protein belongs to the DEAD box helicase family. DEAH subfamily.

It is found in the cytoplasm. The enzyme catalyses ATP + H2O = ADP + phosphate + H(+). In terms of biological role, probable ATP-binding RNA helicase which plays a central role during gametogenesis by repressing transposable elements and preventing their mobilization, which is essential for the germline integrity. Acts via the piRNA metabolic process, which mediates the repression of transposable elements during meiosis by forming complexes composed of piRNAs and Piwi proteins and govern the methylation and subsequent repression of transposons. The chain is Probable ATP-dependent RNA helicase spindle-E (spn-E) from Aedes aegypti (Yellowfever mosquito).